The following is a 382-amino-acid chain: p21-activated protein kinase-interacting protein 1 (382 aa).

WD repeat units lie at residues 37 to 77 (THHS…EHGA), 80 to 120 (HHAG…KTFK), 122 to 160 (HRGH…SAFI), 202 to 240 (TNGK…CLCE), and 243 to 284 (AHEN…KVPP). The interval 313–382 (LPPAAEPCPD…MSEKKRKKKM (70 aa)) is disordered. Positions 352 to 363 (DSKQPTKGNSPV) are enriched in polar residues. The span at 365 to 382 (AKKRKMATMSEKKRKKKM) shows a compositional bias: basic residues.

In terms of assembly, interacts with PAK1.

It localises to the nucleus. It is found in the nucleolus. Its function is as follows. Negatively regulates the PAK1 kinase. PAK1 is a member of the PAK kinase family, which has been shown to play a positive role in the regulation of signaling pathways involving MAPK8 and RELA. PAK1 exists as an inactive homodimer, which is activated by binding of small GTPases such as CDC42 to an N-terminal regulatory domain. PAK1IP1 also binds to the N-terminus of PAK1, and inhibits the specific activation of PAK1 by CDC42. May be involved in ribosomal large subunit assembly. In Mus musculus (Mouse), this protein is p21-activated protein kinase-interacting protein 1 (Pak1ip1).